A 338-amino-acid polypeptide reads, in one-letter code: Glycerol-3-phosphate dehydrogenase [NAD(P)+] (338 aa).

NADPH-binding residues include tryptophan 14, tyrosine 50, and lysine 110. Residues lysine 110, glycine 141, and serine 143 each contribute to the sn-glycerol 3-phosphate site. Position 145 (alanine 145) interacts with NADPH. 5 residues coordinate sn-glycerol 3-phosphate: lysine 196, aspartate 249, serine 259, arginine 260, and asparagine 261. Lysine 196 (proton acceptor) is an active-site residue. Arginine 260 is a binding site for NADPH. Glutamate 285 serves as a coordination point for NADPH.

The protein belongs to the NAD-dependent glycerol-3-phosphate dehydrogenase family.

The protein localises to the cytoplasm. The enzyme catalyses sn-glycerol 3-phosphate + NAD(+) = dihydroxyacetone phosphate + NADH + H(+). The catalysed reaction is sn-glycerol 3-phosphate + NADP(+) = dihydroxyacetone phosphate + NADPH + H(+). It functions in the pathway membrane lipid metabolism; glycerophospholipid metabolism. In terms of biological role, catalyzes the reduction of the glycolytic intermediate dihydroxyacetone phosphate (DHAP) to sn-glycerol 3-phosphate (G3P), the key precursor for phospholipid synthesis. This is Glycerol-3-phosphate dehydrogenase [NAD(P)+] from Malacoplasma penetrans (strain HF-2) (Mycoplasma penetrans).